The primary structure comprises 389 residues: Probable nitrate transporter NarT (389 aa).

12 helical membrane-spanning segments follow: residues 14–34 (TLSL…MPFI), 45–65 (ISII…PFGY), 69–89 (IVGA…PIFF), 97–117 (GMLM…SVGV), 139–159 (GNIG…IIGW), 161–181 (TTVR…FIFG), 211–231 (WYFI…NYLV), 246–266 (GVFI…GDKF), 268–288 (AVKV…ILGI), 294–314 (LFTV…GLIF), 331–351 (IVSM…TYVA), and 353–373 (LTGS…IALF).

The protein belongs to the major facilitator superfamily. Nitrate/nitrite porter (TC 2.A.1.8) family.

The protein localises to the cell membrane. In terms of biological role, probably required for nitrate uptake under anoxic conditions. Also possibly involved in excretion of nitrite produced by the dissimilatory reduction of nitrate. This is Probable nitrate transporter NarT (narT) from Staphylococcus aureus (strain JH9).